Reading from the N-terminus, the 253-residue chain is MDLNPSTFVLEIVNFLVLVWLLKRFLYQPVSAAIEERRRQIARTVAEARDTQTAAETLRMQYESRLADWESEKRQAREAFKQEIEAERQRALDELEKALDAEREKARVLIERQRRDMESDLERQALRLSRQFASRFLERLAGPEMEAALLRMFGEDLAAMSPEQWQALTRALEEQEHPEAEIASAFPLKPESCAELTEMIEARTGRAVAWRFREDPALICGIRLRAGHRVLAANVGEELKFFADGAENSLGGG.

Residues 9-27 form a helical membrane-spanning segment; that stretch reads VLEIVNFLVLVWLLKRFLY.

The protein belongs to the ATPase B chain family. As to quaternary structure, F-type ATPases have 2 components, F(1) - the catalytic core - and F(0) - the membrane proton channel. F(1) has five subunits: alpha(3), beta(3), gamma(1), delta(1), epsilon(1). F(0) has three main subunits: a(1), b(2) and c(10-14). The alpha and beta chains form an alternating ring which encloses part of the gamma chain. F(1) is attached to F(0) by a central stalk formed by the gamma and epsilon chains, while a peripheral stalk is formed by the delta and b chains.

It localises to the cell inner membrane. In terms of biological role, f(1)F(0) ATP synthase produces ATP from ADP in the presence of a proton or sodium gradient. F-type ATPases consist of two structural domains, F(1) containing the extramembraneous catalytic core and F(0) containing the membrane proton channel, linked together by a central stalk and a peripheral stalk. During catalysis, ATP synthesis in the catalytic domain of F(1) is coupled via a rotary mechanism of the central stalk subunits to proton translocation. Component of the F(0) channel, it forms part of the peripheral stalk, linking F(1) to F(0). This chain is ATP synthase subunit b 2, found in Methylococcus capsulatus (strain ATCC 33009 / NCIMB 11132 / Bath).